Consider the following 703-residue polypeptide: uncharacterized protein (703 aa).

Positions 1–23 (MKQIMIFLTSFMLLAMTGQTALA) are cleaved as a signal peptide. Residues 673–693 (MYIGVLALIMVVAAVFIWIAV) form a helical membrane-spanning segment.

It is found in the cell membrane. This is an uncharacterized protein from Bacillus subtilis (strain 168).